Here is a 583-residue protein sequence, read N- to C-terminus: L-galactono-1,4-lactone dehydrogenase 1, mitochondrial (583 aa).

The transit peptide at 1–36 (MRRLLLAGILRRASSSPSSHHHLHLVRALSASSPLP) directs the protein to the mitochondrion. Residues 37-78 (ASDADLRKYAGYALLLLGCGAATYYSFPLPPDALHKKAVPFK) constitute a propeptide, removed in mature form. The chain crosses the membrane as a helical span at residues 45 to 61 (YAGYALLLLGCGAATYY). Residues 95-266 (THEVHTRVLL…AEVTLQCVER (172 aa)) form the FAD-binding PCMH-type domain.

FAD is required as a cofactor.

It localises to the mitochondrion membrane. The catalysed reaction is L-galactono-1,4-lactone + 4 Fe(III)-[cytochrome c] = L-dehydroascorbate + 4 Fe(II)-[cytochrome c] + 5 H(+). Its pathway is cofactor biosynthesis; L-ascorbate biosynthesis. Functionally, involved in the biosynthesis of ascorbic acid. The chain is L-galactono-1,4-lactone dehydrogenase 1, mitochondrial (GLDH1) from Oryza sativa subsp. japonica (Rice).